The sequence spans 322 residues: tRNA dimethylallyltransferase (322 aa).

Residue 19–26 (GPTASGKT) participates in ATP binding. Position 21–26 (21–26 (TASGKT)) interacts with substrate. Interaction with substrate tRNA regions lie at residues 44–47 (DSAL), 168–172 (QRIQR), and 255–260 (RCVGYR).

The protein belongs to the IPP transferase family. As to quaternary structure, monomer. The cofactor is Mg(2+).

It carries out the reaction adenosine(37) in tRNA + dimethylallyl diphosphate = N(6)-dimethylallyladenosine(37) in tRNA + diphosphate. In terms of biological role, catalyzes the transfer of a dimethylallyl group onto the adenine at position 37 in tRNAs that read codons beginning with uridine, leading to the formation of N6-(dimethylallyl)adenosine (i(6)A). The sequence is that of tRNA dimethylallyltransferase from Cupriavidus necator (strain ATCC 17699 / DSM 428 / KCTC 22496 / NCIMB 10442 / H16 / Stanier 337) (Ralstonia eutropha).